We begin with the raw amino-acid sequence, 363 residues long: dTDP-L-rhamnose 4-epimerase (363 aa).

NAD(+)-binding positions include 18–24, 68–69, and 90–94; these read GGAGFIG, DV, and LAAET. Positions 136 and 191 each coordinate substrate. Residues Y191 and K195 each coordinate NAD(+). Y191 serves as the catalytic Proton acceptor. Positions 220 and 259 each coordinate substrate.

Belongs to the NAD(P)-dependent epimerase/dehydratase family. NAD(+) is required as a cofactor.

It carries out the reaction dTDP-6-deoxy-beta-L-talose = dTDP-beta-L-rhamnose. It participates in bacterial outer membrane biogenesis; LPS O-antigen biosynthesis. Functionally, catalyzes the interconvertion of dTDP-6-deoxy-L-talose and dTDP-L-rhamnose. The equilibrium is strongly toward dTDP-L-rhamnose. The protein is dTDP-L-rhamnose 4-epimerase (wbiB) of Burkholderia thailandensis (strain ATCC 700388 / DSM 13276 / CCUG 48851 / CIP 106301 / E264).